The chain runs to 182 residues: Nucleoside-triphosphatase THEP1 (182 aa).

Residues 10–17 and 102–109 contribute to the ATP site; these read GRPGIGKT and VVVIDEIG.

This sequence belongs to the THEP1 NTPase family.

The enzyme catalyses a ribonucleoside 5'-triphosphate + H2O = a ribonucleoside 5'-diphosphate + phosphate + H(+). Has nucleotide phosphatase activity towards ATP, GTP, CTP, TTP and UTP. May hydrolyze nucleoside diphosphates with lower efficiency. The polypeptide is Nucleoside-triphosphatase THEP1 (Thermofilum pendens (strain DSM 2475 / Hrk 5)).